A 113-amino-acid polypeptide reads, in one-letter code: Endoribonuclease SymE (113 aa).

Residues 29–74 form the SpoVT-AbrB domain; the sequence is SRYPDYSRIPAITLKGQWLEAAGFATGTAVVVKVMEGCIVLTAQPA.

This sequence belongs to the SymE family.

It localises to the cytoplasm. Functionally, involved in the degradation and recycling of damaged RNA. It is itself a target for degradation by the ATP-dependent protease Lon. This is Endoribonuclease SymE from Escherichia coli (strain ATCC 8739 / DSM 1576 / NBRC 3972 / NCIMB 8545 / WDCM 00012 / Crooks).